We begin with the raw amino-acid sequence, 87 residues long: uncharacterized protein (87 aa).

2 consecutive transmembrane segments (helical) span residues 7–27 (LFFI…LYSI) and 64–84 (GINI…IPLF).

The protein localises to the membrane. This is an uncharacterized protein from Schizosaccharomyces pombe (strain 972 / ATCC 24843) (Fission yeast).